We begin with the raw amino-acid sequence, 729 residues long: 1,4-alpha-glucan branching enzyme GlgB (729 aa).

D407 serves as the catalytic Nucleophile. The active-site Proton donor is the E460.

It belongs to the glycosyl hydrolase 13 family. GlgB subfamily. Monomer.

The catalysed reaction is Transfers a segment of a (1-&gt;4)-alpha-D-glucan chain to a primary hydroxy group in a similar glucan chain.. It functions in the pathway glycan biosynthesis; glycogen biosynthesis. Catalyzes the formation of the alpha-1,6-glucosidic linkages in glycogen by scission of a 1,4-alpha-linked oligosaccharide from growing alpha-1,4-glucan chains and the subsequent attachment of the oligosaccharide to the alpha-1,6 position. This chain is 1,4-alpha-glucan branching enzyme GlgB, found in Pseudoalteromonas atlantica (strain T6c / ATCC BAA-1087).